Reading from the N-terminus, the 245-residue chain is Pre-hexon-linking protein VIII (245 aa).

Residues 116-167 constitute a propeptide that is removed on maturation; sequence LMVGRTEGRMQLAGGLTEGRVQLSGGFHGRPLVRGRSRRPPRWCGAELTGNG.

It belongs to the adenoviridae hexon-linking protein family. In terms of assembly, interacts with the peripentonal hexons as well as the hexons in the facets. Part of a complex composed of the core-capsid bridging protein, the endosome lysis protein VI and the hexon-linking protein VIII; these interactions bridge the virus core to the capsid. In terms of processing, cleaved by the viral protease during virion maturation. May cause the middle segment to be shed from the capsid.

It is found in the virion. Its subcellular location is the host nucleus. Structural component of the virion that acts as a cement protein on the capsid interior and which glue the peripentonal hexons and group-of-nine hexons together. This chain is Pre-hexon-linking protein VIII, found in Galliformes (FAdV-1).